Reading from the N-terminus, the 307-residue chain is Geranylgeranyl diphosphate synthase (307 aa).

3 residues coordinate isopentenyl diphosphate: K52, R55, and H86. Mg(2+) contacts are provided by D93 and D99. R104 is a binding site for (2E,6E)-farnesyl diphosphate. R105 serves as a coordination point for isopentenyl diphosphate. Residues K188, T189, and Q226 each coordinate (2E,6E)-farnesyl diphosphate.

This sequence belongs to the FPP/GGPP synthase family. Requires Mg(2+) as cofactor.

It catalyses the reaction isopentenyl diphosphate + (2E,6E)-farnesyl diphosphate = (2E,6E,10E)-geranylgeranyl diphosphate + diphosphate. The protein operates within isoprenoid biosynthesis; geranylgeranyl diphosphate biosynthesis; geranylgeranyl diphosphate from farnesyl diphosphate and isopentenyl diphosphate: step 1/1. Catalyzes the condensation of farnesyl diphosphate (FPP) and isopentenyl diphosphate (IPP) to yield geranylgeranyl diphosphate (GGPP) needed for biosynthesis of carotenoids and diterpenes. In Pseudescherichia vulneris (Escherichia vulneris), this protein is Geranylgeranyl diphosphate synthase (crtE).